The following is a 315-amino-acid chain: Ribosomal RNA small subunit methyltransferase H (315 aa).

Residues 33–35, D52, F84, D106, and Q113 each bind S-adenosyl-L-methionine; that span reads GGH. The interval 294-315 is disordered; sequence SSDELEENNRSHSAKLRVAEKL.

The protein belongs to the methyltransferase superfamily. RsmH family.

It is found in the cytoplasm. It carries out the reaction cytidine(1402) in 16S rRNA + S-adenosyl-L-methionine = N(4)-methylcytidine(1402) in 16S rRNA + S-adenosyl-L-homocysteine + H(+). In terms of biological role, specifically methylates the N4 position of cytidine in position 1402 (C1402) of 16S rRNA. This is Ribosomal RNA small subunit methyltransferase H from Lactobacillus johnsonii (strain CNCM I-12250 / La1 / NCC 533).